The chain runs to 506 residues: MRLNLEHFDIKIGQHKVMFNVADAKELGVNPGDRVRIRGHQSISAIVDTTEDMVPPGTLGVFSEVYEHFEDWDKPVEVVPALRSKSSGVIKKMLDKKSVLQDEIKLLVNDIVEENLSDVELSAFITASYIHGMTDDEVEWLTRAMIDTGDTIEFDTHPVMDKHSIGGVPGNKISLLVVPIVAANGLLIPKTSSRAITGAGGTADLMEVLSPVEFSSEEVKEIAEKVGGALVWGGATNIAPADDKLIRVEYPLSIDPYYQMLASIMAKKGAIGAENVVMDIPIGPSTKVPTVQEGQKLARDLINLGHRLGMNVECAITYGSSPIGRRVGPCLEVREAMKVLESMEGPNSLIEKSAALAGILLEMGGAAPRDRGKELALETLRNGKALEKMKQIIEAQGGDPNIKSDDIQVGQYTADIYASTDGYVIEFDNKWIIEIARLAGAPNDKGAGVAIHKKMGEQVKKGDAILTIYAEKEFKLDLALTTAQRTNPIIVEGMLLKRIPGIYGFQ.

AMP is bound by residues glycine 167, 193–198, and threonine 202; that span reads SRAITG. Aspartate 255 serves as the catalytic Proton donor. Residues serine 263 and lysine 287 each coordinate AMP.

The protein belongs to the thymidine/pyrimidine-nucleoside phosphorylase family. Type 2 subfamily.

The catalysed reaction is AMP + phosphate = alpha-D-ribose 1,5-bisphosphate + adenine. It carries out the reaction CMP + phosphate = cytosine + alpha-D-ribose 1,5-bisphosphate. The enzyme catalyses UMP + phosphate = alpha-D-ribose 1,5-bisphosphate + uracil. Catalyzes the conversion of AMP and phosphate to adenine and ribose 1,5-bisphosphate (R15P). Exhibits phosphorylase activity toward CMP and UMP in addition to AMP. Functions in an archaeal AMP degradation pathway, together with R15P isomerase and RubisCO. This Methanosarcina acetivorans (strain ATCC 35395 / DSM 2834 / JCM 12185 / C2A) protein is AMP phosphorylase.